A 554-amino-acid chain; its full sequence is Hydroxylamine reductase (554 aa).

Residues C3, C6, C18, and C25 each coordinate [2Fe-2S] cluster. 8 residues coordinate hybrid [4Fe-2O-2S] cluster: H252, E276, C320, C408, C436, C461, E495, and K497. At C408 the chain carries Cysteine persulfide.

Belongs to the HCP family. [2Fe-2S] cluster serves as cofactor. Hybrid [4Fe-2O-2S] cluster is required as a cofactor.

The protein resides in the cytoplasm. The enzyme catalyses A + NH4(+) + H2O = hydroxylamine + AH2 + H(+). Functionally, catalyzes the reduction of hydroxylamine to form NH(3) and H(2)O. In Shewanella baltica (strain OS223), this protein is Hydroxylamine reductase.